A 524-amino-acid chain; its full sequence is uncharacterized protein (524 aa).

The segment at 1-65 (MSDPFFTRPE…IDEENEDTYE (65 aa)) is disordered. Positions 21-32 (SKREKENQKLER) are enriched in basic and acidic residues. Residues 51–64 (GFEDEIDEENEDTY) show a composition bias toward acidic residues. WD repeat units follow at residues 131–176 (IETA…DTEN), 206–245 (DHVK…PQHC), 248–287 (HHRD…YIET), 290–329 (GHQD…QLVF), 342–380 (YMEG…PLFT), 409–448 (PQPR…RSFE), and 457–503 (SVYG…PNSG).

Its subcellular location is the nucleus. This is an uncharacterized protein from Schizosaccharomyces pombe (strain 972 / ATCC 24843) (Fission yeast).